The following is a 103-amino-acid chain: Small ribosomal subunit protein uS10 (103 aa).

It belongs to the universal ribosomal protein uS10 family. As to quaternary structure, part of the 30S ribosomal subunit.

In terms of biological role, involved in the binding of tRNA to the ribosomes. The sequence is that of Small ribosomal subunit protein uS10 from Wigglesworthia glossinidia brevipalpis.